We begin with the raw amino-acid sequence, 174 residues long: Co-chaperone protein HscB homolog (174 aa).

The 73-residue stretch at 2-74 (NYFELFSLLP…IQRAEHLLTL (73 aa)) folds into the J domain.

Belongs to the HscB family. Interacts with HscA and stimulates its ATPase activity.

Functionally, co-chaperone involved in the maturation of iron-sulfur cluster-containing proteins. Seems to help targeting proteins to be folded toward HscA. In Shewanella halifaxensis (strain HAW-EB4), this protein is Co-chaperone protein HscB homolog.